The sequence spans 257 residues: A-factor type gamma-butyrolactone 1'-reductase (1S-forming) (257 aa).

The Proton acceptor role is filled by tyrosine 161.

The protein belongs to the short-chain dehydrogenases/reductases (SDR) family. Homodimer.

The catalysed reaction is a (3R,4R)-3-[(1S)-1-hydroxyalkyl]-4-(hydroxymethyl)oxolan-2-one + NADP(+) = a (3R,4R)-3-alkanoyl-4-(hydroxymethyl)oxolan-2-one + NADPH + H(+). Involved in the biosynthesis of virginiae butanolide (VB), which regulates the production of antibiotic virginiamycin. Catalyzes the reduction of 6-dehydro-VB-A to VB-A, the last catalytic step in VB biosynthesis. In vitro, can use various synthetic A-factor-type analogs. This Streptomyces virginiae (Streptomyces cinnamonensis) protein is A-factor type gamma-butyrolactone 1'-reductase (1S-forming).